Consider the following 209-residue polypeptide: Neurotrophin-4 (209 aa).

The first 21 residues, 1 to 21 (MLPRHSCSLLLFLLLLPSVPM), serve as a signal peptide directing secretion. Positions 22–79 (EPQPPSSTLPPFLAPEWDLLSPRVALSRGTPAGPPLLFLLEAGAYGEPAGAPANRSRR) are excised as a propeptide. N-linked (GlcNAc...) asparagine glycosylation is present at asparagine 75. 3 cysteine pairs are disulfide-bonded: cysteine 96/cysteine 169, cysteine 140/cysteine 198, and cysteine 157/cysteine 200.

Belongs to the NGF-beta family. As to expression, expressed in thymus, muscle, ovary, brain, heart, stomach and kidney. Expressed in both embryo and adult tissues.

The protein resides in the secreted. Functionally, target-derived survival factor for peripheral sensory sympathetic neurons. May promote ameloblast differentiation and subsequent reduction in proliferation of ameloblasts. The polypeptide is Neurotrophin-4 (Ntf4) (Rattus norvegicus (Rat)).